Reading from the N-terminus, the 712-residue chain is MNNVPSTSRENSRNPSESSSSIQDLLINVEANDLSSVVNEDVSITMSAPPSPATPRKIDFSAEIETPKSTGIRRRLTLKDSIGSDLENDPESTPAIRKPSRISYDERLTVICDSQTSSPLQTPSPSQERDSAPFADVFQPKGFFSFFWEELTRGYSLHNDHARFSEKRRKVYAFLRIPLELEQFLTYGLLQCIDAFFYLFTFLPLRFLMSIFGALLRIKRWTSAETCDFLKVVIIVAASMLIREIDSSFLYHQVRSQGVIKLYIFYNMLEVADRLFSSLGQDIFDALLWTANSEKRFSVGYFIRTCGHLIVAILYATLHSFLVILQATTLNVAFNSHNQTVLAIMMSNNFVELKGSVFKKFAKANLFQMACSDVRERFHIFALLFVVMIRNMTAVNWNIDSFTEMIPDIIMVVGCEYFVDWLKHAFITKFNEINAEVYKDFTITIAFDVIRSRDQSAFSDYSDQVSRRMGFIPIPLSIMIIRVLSQTFTLDNWGSCIIFGIGWLLVFAVKICNGVVMLGQACHHVKRFRDIQARAEFELFRKRMVEKKSKSAPNSPRMSLIDFTDVLHQPAAGKGFTVSDMLSQWEELQPSLLSSEIRRSTDRETAVSHLTARSDERTPRRAVSMAHIPRRDRSEPPPAPSMDQDPQLDTEDPVVTENNTNSNSEQASPVKKKTTAAPVTSSASTNTNATSSDELADVTAYKMPEQGVQRIE.

The segment covering 1–21 (MNNVPSTSRENSRNPSESSSS) has biased composition (low complexity). Disordered regions lie at residues 1–22 (MNNVPSTSRENSRNPSESSSSI) and 44–66 (ITMSAPPSPATPRKIDFSAEIET). 7 helical membrane-spanning segments follow: residues 196-216 (FFYLFTFLPLRFLMSIFGALL), 222-242 (TSAETCDFLKVVIIVAASMLI), 305-325 (TCGHLIVAILYATLHSFLVIL), 379-399 (HIFALLFVVMIRNMTAVNWNI), 402-422 (FTEMIPDIIMVVGCEYFVDWL), 470-490 (GFIPIPLSIMIIRVLSQTFTL), and 497-517 (IIFGIGWLLVFAVKICNGVVM). Basic and acidic residues predominate over residues 596–619 (EIRRSTDRETAVSHLTARSDERTP). Positions 596-712 (EIRRSTDRET…MPEQGVQRIE (117 aa)) are disordered. Positions 656–667 (TENNTNSNSEQA) are enriched in polar residues. Positions 675–692 (TAAPVTSSASTNTNATSS) are enriched in low complexity.

Belongs to the TAPT1 family.

Its subcellular location is the membrane. The protein is Protein TAPT1 homolog of Caenorhabditis elegans.